The chain runs to 190 residues: Hypoxanthine/guanine phosphoribosyltransferase (190 aa).

It belongs to the purine/pyrimidine phosphoribosyltransferase family. Archaeal HPRT subfamily. In terms of assembly, homodimer.

The protein resides in the cytoplasm. It carries out the reaction IMP + diphosphate = hypoxanthine + 5-phospho-alpha-D-ribose 1-diphosphate. The enzyme catalyses GMP + diphosphate = guanine + 5-phospho-alpha-D-ribose 1-diphosphate. Its pathway is purine metabolism; IMP biosynthesis via salvage pathway; IMP from hypoxanthine: step 1/1. Catalyzes a salvage reaction resulting in the formation of IMP that is energically less costly than de novo synthesis. In Methanosalsum zhilinae (strain DSM 4017 / NBRC 107636 / OCM 62 / WeN5) (Methanohalophilus zhilinae), this protein is Hypoxanthine/guanine phosphoribosyltransferase.